We begin with the raw amino-acid sequence, 140 residues long: ATP synthase epsilon chain (140 aa).

The protein belongs to the ATPase epsilon chain family. In terms of assembly, F-type ATPases have 2 components, CF(1) - the catalytic core - and CF(0) - the membrane proton channel. CF(1) has five subunits: alpha(3), beta(3), gamma(1), delta(1), epsilon(1). CF(0) has three main subunits: a, b and c.

The protein localises to the cell inner membrane. Produces ATP from ADP in the presence of a proton gradient across the membrane. This is ATP synthase epsilon chain from Stenotrophomonas maltophilia (strain R551-3).